Here is a 189-residue protein sequence, read N- to C-terminus: MASYSTNEFKGGLKVLIDGNPMVIVENEFVKPGKGQAFNRVKLKNLLNDRVVEKTFKSGESVEAADVEELTTVYSYFDGDSYVFMHPETFEQYMVSEEALGETKKWLKDQDEYQVILFNGQPISIIAPNFVNLEIIETDPGLKGDTAGTGGKPATLSTGAVVRVPLFVQTGEIIKVDTRTSTYVSRVKD.

Lysine 34 bears the N6-(3,6-diaminohexanoyl)-5-hydroxylysine mark.

Belongs to the elongation factor P family. In terms of processing, may be beta-lysylated on the epsilon-amino group of Lys-34 by the combined action of EpmA and EpmB, and then hydroxylated on the C5 position of the same residue by EpmC (if this protein is present). Lysylation is critical for the stimulatory effect of EF-P on peptide-bond formation. The lysylation moiety may extend toward the peptidyltransferase center and stabilize the terminal 3-CCA end of the tRNA. Hydroxylation of the C5 position on Lys-34 may allow additional potential stabilizing hydrogen-bond interactions with the P-tRNA.

It localises to the cytoplasm. It participates in protein biosynthesis; polypeptide chain elongation. In terms of biological role, involved in peptide bond synthesis. Alleviates ribosome stalling that occurs when 3 or more consecutive Pro residues or the sequence PPG is present in a protein, possibly by augmenting the peptidyl transferase activity of the ribosome. Modification of Lys-34 is required for alleviation. In Francisella tularensis subsp. novicida (strain U112), this protein is Elongation factor P.